The chain runs to 492 residues: 2,3-bisphosphoglycerate-independent phosphoglycerate mutase (492 aa).

Aspartate 11 and serine 61 together coordinate Mn(2+). The active-site Phosphoserine intermediate is the serine 61. Substrate is bound by residues histidine 118, 147-148 (RD), arginine 178, arginine 184, 248-251 (RNDR), and lysine 320. Mn(2+) is bound by residues aspartate 386, histidine 390, aspartate 427, histidine 428, and histidine 445.

This sequence belongs to the BPG-independent phosphoglycerate mutase family. As to quaternary structure, monomer. Mn(2+) is required as a cofactor.

The catalysed reaction is (2R)-2-phosphoglycerate = (2R)-3-phosphoglycerate. Its pathway is carbohydrate degradation; glycolysis; pyruvate from D-glyceraldehyde 3-phosphate: step 3/5. Its function is as follows. Catalyzes the interconversion of 2-phosphoglycerate and 3-phosphoglycerate. This is 2,3-bisphosphoglycerate-independent phosphoglycerate mutase from Campylobacter jejuni subsp. doylei (strain ATCC BAA-1458 / RM4099 / 269.97).